A 388-amino-acid chain; its full sequence is Mannitol-1-phosphate 5-dehydrogenase (388 aa).

5–16 serves as a coordination point for NAD(+); the sequence is AIQFGGGNIGRG. Lys-213 is a catalytic residue.

It belongs to the mannitol dehydrogenase family. In terms of assembly, monomer.

The catalysed reaction is D-mannitol 1-phosphate + NAD(+) = beta-D-fructose 6-phosphate + NADH + H(+). Catalyzes the NAD(H)-dependent interconversion of D-fructose 6-phosphate and D-mannitol 1-phosphate in the mannitol metabolic pathway. This is Mannitol-1-phosphate 5-dehydrogenase (mpdA) from Aspergillus terreus (strain NIH 2624 / FGSC A1156).